Reading from the N-terminus, the 426-residue chain is Enolase (426 aa).

Residue Gln163 coordinates (2R)-2-phosphoglycerate. Glu205 functions as the Proton donor in the catalytic mechanism. Mg(2+) contacts are provided by Asp242, Glu285, and Asp312. The (2R)-2-phosphoglycerate site is built by Lys337, Arg366, Ser367, and Lys388. Lys337 (proton acceptor) is an active-site residue.

It belongs to the enolase family. It depends on Mg(2+) as a cofactor.

It localises to the cytoplasm. It is found in the secreted. The protein resides in the cell surface. The catalysed reaction is (2R)-2-phosphoglycerate = phosphoenolpyruvate + H2O. Its pathway is carbohydrate degradation; glycolysis; pyruvate from D-glyceraldehyde 3-phosphate: step 4/5. Its function is as follows. Catalyzes the reversible conversion of 2-phosphoglycerate (2-PG) into phosphoenolpyruvate (PEP). It is essential for the degradation of carbohydrates via glycolysis. The sequence is that of Enolase from Nitrobacter winogradskyi (strain ATCC 25391 / DSM 10237 / CIP 104748 / NCIMB 11846 / Nb-255).